Reading from the N-terminus, the 200-residue chain is Holliday junction branch migration complex subunit RuvA (200 aa).

A domain I region spans residues 1-64 (MYAYFRGELI…EDLMQLYGFI (64 aa)). The interval 65-143 (EEEERQLFLL…KLQQTRPGKT (79 aa)) is domain II. The tract at residues 144 to 154 (AGAGSVASLSE) is flexible linker. The segment at 154 to 200 (EDALQALMTLGFSRASAQQAVTRALLSAENPGVEDIVREALQNIRNH) is domain III.

This sequence belongs to the RuvA family. As to quaternary structure, homotetramer. Forms an RuvA(8)-RuvB(12)-Holliday junction (HJ) complex. HJ DNA is sandwiched between 2 RuvA tetramers; dsDNA enters through RuvA and exits via RuvB. An RuvB hexamer assembles on each DNA strand where it exits the tetramer. Each RuvB hexamer is contacted by two RuvA subunits (via domain III) on 2 adjacent RuvB subunits; this complex drives branch migration. In the full resolvosome a probable DNA-RuvA(4)-RuvB(12)-RuvC(2) complex forms which resolves the HJ.

It is found in the cytoplasm. In terms of biological role, the RuvA-RuvB-RuvC complex processes Holliday junction (HJ) DNA during genetic recombination and DNA repair, while the RuvA-RuvB complex plays an important role in the rescue of blocked DNA replication forks via replication fork reversal (RFR). RuvA specifically binds to HJ cruciform DNA, conferring on it an open structure. The RuvB hexamer acts as an ATP-dependent pump, pulling dsDNA into and through the RuvAB complex. HJ branch migration allows RuvC to scan DNA until it finds its consensus sequence, where it cleaves and resolves the cruciform DNA. The polypeptide is Holliday junction branch migration complex subunit RuvA (Prosthecochloris aestuarii (strain DSM 271 / SK 413)).